Consider the following 300-residue polypeptide: 7-methylguanosine phosphate-specific 5'-nucleotidase (300 aa).

The active-site Nucleophile is aspartate 41. Aspartate 41 and aspartate 43 together coordinate Mg(2+). The active-site Proton donor is aspartate 43. Glutamate 88 is a CMP binding site. Glutamate 88 is a binding site for N(7)-methyl-GMP. Substrate is bound by residues 156–157 and lysine 205; that span reads SA. Mg(2+) is bound at residue aspartate 230. Lysine 256 carries the post-translational modification N6-acetyllysine.

It belongs to the pyrimidine 5'-nucleotidase family. As to quaternary structure, monomer.

The protein localises to the cytoplasm. It catalyses the reaction N(7)-methyl-GMP + H2O = N(7)-methylguanosine + phosphate. The catalysed reaction is CMP + H2O = cytidine + phosphate. The enzyme catalyses a ribonucleoside 5'-phosphate + H2O = a ribonucleoside + phosphate. Specifically hydrolyzes 7-methylguanosine monophosphate (m(7)GMP) to 7-methylguanosine and inorganic phosphate. The specific activity for m(7)GMP may protect cells against undesired salvage of m(7)GMP and its incorporation into nucleic acids. Also has weak activity for CMP. UMP and purine nucleotides are poor substrates. The sequence is that of 7-methylguanosine phosphate-specific 5'-nucleotidase (Nt5c3b) from Rattus norvegicus (Rat).